A 131-amino-acid polypeptide reads, in one-letter code: Lymphocyte antigen 6E (131 aa).

An N-terminal signal peptide occupies residues Met1 to Ser20. The 81-residue stretch at Leu21–Ser101 folds into the UPAR/Ly6 domain. 5 disulfides stabilise this stretch: Cys23-Cys48, Cys26-Cys35, Cys41-Cys71, Cys75-Cys92, and Cys93-Cys98. An N-linked (GlcNAc...) asparagine glycan is attached at Asn99. Residue Ser101 is the site of GPI-anchor amidated serine attachment. A propeptide spans Ala102–Pro131 (removed in mature form).

As to quaternary structure, interacts with CHRNA4. In terms of tissue distribution, widely expressed, predominantly in liver, kidney, ovary, spleen and peripheral blood Leukocytes.

The protein localises to the cell membrane. In terms of biological role, GPI-anchored cell surface protein that regulates T-lymphocytes proliferation, differentiation, and activation. Regulates the T-cell receptor (TCR) signaling by interacting with component CD3Z/CD247 at the plasma membrane, leading to CD3Z/CD247 phosphorylation modulation. Restricts the entry of human coronaviruses, including SARS-CoV, MERS-CoV and SARS-CoV-2, by interfering with spike protein-mediated membrane fusion. Also plays an essential role in placenta formation by acting as the main receptor for syncytin-A (SynA). Therefore, participates in the normal fusion of syncytiotrophoblast layer I (SynT-I) and in the proper morphogenesis of both fetal and maternal vasculatures within the placenta. May also act as a modulator of nicotinic acetylcholine receptors (nAChRs) activity. (Microbial infection) Promotes entry, likely through an enhanced virus-cell fusion process, of various viruses including HIV-1, West Nile virus, dengue virus and Zika virus. In contrast, the paramyxovirus PIV5, which enters at the plasma membrane, does not require LY6E. Mechanistically, adopts a microtubule-like organization upon viral infection and enhances viral uncoating after endosomal escape. The chain is Lymphocyte antigen 6E from Homo sapiens (Human).